Consider the following 429-residue polypeptide: Uracil permease (429 aa).

Residues 1-13 lie on the Cytoplasmic side of the membrane; sequence MTRRAIGVSERPP. The chain crosses the membrane as a helical span at residues 14–37; the sequence is LLQTIPLSLQHLFAMFGATVLVPV. Over 38–41 the chain is Periplasmic; the sequence is LFHI. Residues 42-61 traverse the membrane as a helical segment; sequence NPATVLLFNGIGTLLYLFIC. The Cytoplasmic portion of the chain corresponds to 62–64; sequence KGK. A discontinuously helical membrane pass occupies residues 65 to 81; sequence IPAYLGSSFAFISPVLL. Phe-73 provides a ligand contact to uracil. Topologically, residues 82–89 are periplasmic; that stretch reads LLPLGYEV. Residues 90–110 traverse the membrane as a helical segment; that stretch reads ALGGFIMCGVLFCLVSFIVKK. The Cytoplasmic portion of the chain corresponds to 111–122; that stretch reads AGTGWLDVLFPP. A helical membrane pass occupies residues 123–144; the sequence is AAMGAIVAVIGLELAGVAAGMA. Topologically, residues 145 to 155 are periplasmic; that stretch reads GLLPAEGQTPD. The chain crosses the membrane as a helical span at residues 156–171; sequence SKTIIISITTLAVTVL. Residues 172–178 lie on the Cytoplasmic side of the membrane; it reads GSVLFRG. A helical membrane pass occupies residues 179–199; that stretch reads FLAIIPILIGVLVGYALSFAM. At 200-224 the chain is on the periplasmic side; sequence GIVDTTPIINAHWFALPTLYTPRFE. A helical membrane pass occupies residues 225-248; it reads WFAILTILPAALVVIAEHVGHLVV. Residue Glu-241 coordinates uracil. Residues 249–261 lie on the Cytoplasmic side of the membrane; the sequence is TANIVKKDLLRDP. A helical membrane pass occupies residues 262–281; sequence GLHRSMFANGLSTVISGFFG. The discontinuously helical transmembrane segment at 282-298 threads the bilayer; it reads STPNTTYGENIGVMAIT. Uracil contacts are provided by Gly-289 and Glu-290. The Cytoplasmic segment spans residues 299–301; that stretch reads RVY. The chain crosses the membrane as a helical span at residues 302–319; the sequence is STWVIGGAAIFAILLSCV. At 320–332 the chain is on the periplasmic side; that stretch reads GKLAAAIQMIPLP. A helical transmembrane segment spans residues 333-354; sequence VMGGVSLLLYGVIGASGIRVLI. Residues 355 to 365 lie on the Cytoplasmic side of the membrane; the sequence is ESKVDYNKAQN. Residues 366–401 constitute an intramembrane region (discontinuously helical); the sequence is LILTSVILIIGVSGAKVNIGAAELKGMALATIVGIG. Residues 402-429 are Cytoplasmic-facing; it reads LSLIFKLISVLRPEEVVLDAEDADITDK.

Belongs to the nucleobase:cation symporter-2 (NCS2) (TC 2.A.40) family.

Its subcellular location is the cell inner membrane. It carries out the reaction uracil(in) + H(+)(in) = uracil(out) + H(+)(out). In terms of biological role, transport of uracil in the cell. The protein is Uracil permease (uraA) of Escherichia coli O157:H7.